A 675-amino-acid polypeptide reads, in one-letter code: Zinc finger CCCH domain-containing protein 65 (675 aa).

A disordered region spans residues 294–320; sequence TFSNEAKMDPGTSIKKRSAPSKDAKAR. Positions 307 to 320 are enriched in basic residues; sequence IKKRSAPSKDAKAR. Residues 314–342 are a coiled coil; sequence SKDAKARKRAKARIKRAQERIALGVKKLK. 3 consecutive C3H1-type zinc fingers follow at residues 350 to 377, 384 to 406, and 409 to 432; these read PKPI…HDTI, PCCY…HDLS, and PCNN…HKGT. Disordered regions lie at residues 487–572 and 586–612; these read LKPS…LPLG and EQKT…SHIQ. The segment covering 490 to 504 has biased composition (low complexity); that stretch reads SSHSNQRNSSDASSS. Residues 543–567 are compositionally biased toward polar residues; sequence KASSASKPNTDNSDSQTLKQSQQGS. A compositionally biased stretch (basic and acidic residues) spans 586-595; that stretch reads EQKTLNREPQ. The segment covering 597–612 has biased composition (polar residues); sequence PASSKNLKTTPSSHIQ.

In terms of biological role, possesses RNA-binding and ribonuclease activities in vitro. The sequence is that of Zinc finger CCCH domain-containing protein 65 (EMB1789) from Arabidopsis thaliana (Mouse-ear cress).